A 661-amino-acid chain; its full sequence is Cyclic di-GMP phosphodiesterase PdeR (661 aa).

Residues 109-179 enclose the PAS domain; the sequence is GLSFAEQVVS…RRNNRVFFRS (71 aa). A GGDEF domain is found at 265–397; sequence NKVGVVYLDL…GRGQFCVFTP (133 aa). One can recognise an EAL domain in the interval 406-658; that stretch reads YLWLDTNLRK…AFERWYKRYL (253 aa).

As to quaternary structure, interacts with DgcM and MlrA.

The catalysed reaction is 3',3'-c-di-GMP + H2O = 5'-phosphoguanylyl(3'-&gt;5')guanosine + H(+). Part of a signaling cascade that regulates curli biosynthesis. The cascade is composed of two cyclic-di-GMP (c-di-GMP) control modules, in which c-di-GMP controlled by the DgcE/PdeH pair (module I) regulates the activity of the DgcM/PdeR pair (module II), which in turn regulates activity of the transcription factor MlrA and expression of the master biofilm regulator csgD. PdeR acts as a trigger enzyme that connects modules I and II. It inhibits DgcM and MlrA by direct interaction. Inhibition is relieved when PdeR binds and degrades c-di-GMP generated by module I. The chain is Cyclic di-GMP phosphodiesterase PdeR from Escherichia coli (strain K12).